Consider the following 120-residue polypeptide: Large ribosomal subunit protein bL17 (120 aa).

The protein belongs to the bacterial ribosomal protein bL17 family. As to quaternary structure, part of the 50S ribosomal subunit. Contacts protein L32.

This Anoxybacillus flavithermus (strain DSM 21510 / WK1) protein is Large ribosomal subunit protein bL17.